Consider the following 67-residue polypeptide: Large ribosomal subunit protein uL29 (67 aa).

The protein belongs to the universal ribosomal protein uL29 family.

This chain is Large ribosomal subunit protein uL29, found in Sorangium cellulosum (strain So ce56) (Polyangium cellulosum (strain So ce56)).